The sequence spans 428 residues: Putative heme-binding peroxidase (428 aa).

Residues 1–33 are disordered; it reads MTAIQKPVVAKREAPKAEVNPTVSRSTQTETIK. A compositionally biased stretch (polar residues) spans 21 to 32; that stretch reads PTVSRSTQTETI. The active-site Proton acceptor is the histidine 188. Histidine 312 is a heme b binding site. Catalysis depends on tryptophan 328, which acts as the Tryptophan radical intermediate.

The protein belongs to the peroxidase family. Cytochrome c peroxidase subfamily. It depends on heme b as a cofactor.

Its function is as follows. Destroys radicals which are normally produced within the cells and which are toxic to biological systems. This Debaryomyces hansenii (strain ATCC 36239 / CBS 767 / BCRC 21394 / JCM 1990 / NBRC 0083 / IGC 2968) (Yeast) protein is Putative heme-binding peroxidase.